The chain runs to 468 residues: Uronate isomerase (468 aa).

Belongs to the metallo-dependent hydrolases superfamily. Uronate isomerase family.

It carries out the reaction D-glucuronate = D-fructuronate. It catalyses the reaction aldehydo-D-galacturonate = keto-D-tagaturonate. It functions in the pathway carbohydrate metabolism; pentose and glucuronate interconversion. The chain is Uronate isomerase from Marinomonas sp. (strain MWYL1).